The chain runs to 281 residues: 2-C-methyl-D-erythritol 4-phosphate cytidylyltransferase (281 aa).

The protein belongs to the IspD/TarI cytidylyltransferase family. IspD subfamily.

The enzyme catalyses 2-C-methyl-D-erythritol 4-phosphate + CTP + H(+) = 4-CDP-2-C-methyl-D-erythritol + diphosphate. Its pathway is isoprenoid biosynthesis; isopentenyl diphosphate biosynthesis via DXP pathway; isopentenyl diphosphate from 1-deoxy-D-xylulose 5-phosphate: step 2/6. Functionally, catalyzes the formation of 4-diphosphocytidyl-2-C-methyl-D-erythritol from CTP and 2-C-methyl-D-erythritol 4-phosphate (MEP). The chain is 2-C-methyl-D-erythritol 4-phosphate cytidylyltransferase from Psychrobacter arcticus (strain DSM 17307 / VKM B-2377 / 273-4).